The following is a 797-amino-acid chain: MLENKNHKKISLSGKSLLMGTLSTAAIVLSASTANAATINADNVNENQTVEVTASSVNNENNKQVTEKDSADKSTSDVAEDANTKKSNENTETTEKNTQTVVTNAPVSDVKNTNTVTAETPVDKVVNNSDQKTTNAATTDTKKDDVKQVEKKDSVDKTNAEENKDSSVKPAENATKAELKGQVKDIVEESGVDTSKLTNDQINELNKINFSKEAKSGTQLTYNDFKKIAKTLIEQDARYAIPFFNASKIKNMPAAKTLDAQSGKVEDLEIWDSWPVQDAKTGYVSNWNGYQLVIGMMGVPNVNDNHIYLLYNKYGDNDFNHWKNAGPIFGLGTPVIQQWSGSATLNKDGSIQLYYTKVDTSDNNTNHQKLASATVYLNLEKDQDKISIAHVDNDHIVFEGDGYHYQTYDQWKETNKGADNIAMRDAHVIDDDNGNRYLVFEASTGTENYQGDDQIYQWLNYGGTNKDNLGDFFQILSNSDIKDRAKWSNAAIGIIKLNDDVKNPSVAKVYSPLISAPMVSDEIERPDVVKLGNKYYLFAATRLNRGSNDDAWMATNKAVGDNVAMIGYVSDNLTHGYVPLNESGVVLTASVPANWRTATYSYYAVPVEGRDDQLLITSYITNRGEVAGKGMHATWAPSFLLQINPDNTTTVLAKMTNQGDWIWDDSSENPDMMGVLEKDAPNSAALPGEWGKPVDWDLIGGYNLKPHQPVTPIPNVPTTPETPTTPDKPEVPTTPEVPTTPETPTPEAPKNPVKKTSQSKLPKAGDKNSFAAVVLGAVSSILGAVGLTGVSKRKRNN.

A signal peptide spans 1-36; it reads MLENKNHKKISLSGKSLLMGTLSTAAIVLSASTANA. A compositionally biased stretch (polar residues) spans 54 to 64; that stretch reads ASSVNNENNKQ. Residues 54–176 form a disordered region; sequence ASSVNNENNK…SVKPAENATK (123 aa). Composition is skewed to basic and acidic residues over residues 65-75 and 82-95; these read VTEKDSADKST and ANTK…ETTE. Low complexity predominate over residues 130–139; the sequence is DQKTTNAATT. Residues 140-167 are compositionally biased toward basic and acidic residues; it reads DTKKDDVKQVEKKDSVDKTNAEENKDSS. Position 271 (Trp-271) interacts with substrate. Asp-272 serves as the catalytic Nucleophile. Residue Asn-317 participates in Ca(2+) binding. Ser-340 is a substrate binding site. Asp-419 serves as a coordination point for Ca(2+). 424 to 425 contributes to the substrate binding site; sequence RD. The Ca(2+) site is built by Gln-450, Trp-487, Asn-489, and Asp-521. Residues 522–524 and Arg-542 each bind substrate; that span reads EIE. Catalysis depends on Glu-524, which acts as the Proton donor/acceptor. Positions 660, 662, and 667 each coordinate Ca(2+). The disordered stretch occupies residues 708–766; sequence QPVTPIPNVPTTPETPTTPDKPEVPTTPEVPTTPETPTPEAPKNPVKKTSQSKLPKAGD. Over residues 718–740 the composition is skewed to low complexity; it reads TTPETPTTPDKPEVPTTPEVPTT. Positions 761-765 match the LPXTG sorting signal motif; it reads LPKAG. Ala-764 carries the pentaglycyl murein peptidoglycan amidated alanine modification. Positions 765 to 797 are cleaved as a propeptide — removed by sortase; the sequence is GDKNSFAAVVLGAVSSILGAVGLTGVSKRKRNN.

It belongs to the glycosyl hydrolase 68 family. The cofactor is Ca(2+).

The protein localises to the secreted. It is found in the cell wall. It catalyses the reaction [(2-&gt;1)-beta-D-fructosyl](n) + sucrose = [(2-&gt;1)-beta-D-fructosyl](n+1) + D-glucose. Fructosyltransferase that catalyzes the polymerization of the fructose moiety of sucrose to produce inulin polymer and inulin oligosaccharides such as 1-kestose and nystose. The protein is Inulosucrase of Lactobacillus johnsonii (strain CNCM I-12250 / La1 / NCC 533).